The following is a 528-amino-acid chain: Phosphoenolpyruvate carboxykinase (ATP) (528 aa).

Positions 56, 192, and 198 each coordinate substrate. Residues lysine 198, histidine 217, and 233-241 (GLSGTGKTT) contribute to the ATP site. The Mn(2+) site is built by lysine 198 and histidine 217. Mn(2+) is bound at residue aspartate 254. Positions 282, 319, and 444 each coordinate ATP. Arginine 319 contributes to the substrate binding site.

The protein belongs to the phosphoenolpyruvate carboxykinase (ATP) family. The cofactor is Mn(2+).

The protein resides in the cytoplasm. It carries out the reaction oxaloacetate + ATP = phosphoenolpyruvate + ADP + CO2. The protein operates within carbohydrate biosynthesis; gluconeogenesis. Functionally, involved in the gluconeogenesis. Catalyzes the conversion of oxaloacetate (OAA) to phosphoenolpyruvate (PEP) through direct phosphoryl transfer between the nucleoside triphosphate and OAA. The polypeptide is Phosphoenolpyruvate carboxykinase (ATP) (Bacillus anthracis (strain A0248)).